A 415-amino-acid chain; its full sequence is Phakinin (415 aa).

Residues 1–26 form a disordered region; that stretch reads MSTRRVVVDAPAGASSSMPLQRHKAS. Residue S2 is modified to N-acetylserine. Residues 2-114 are head; sequence STRRVVVDAP…LGAVEDLGGC (113 aa). 3 positions are modified to phosphoserine: S26, S32, and S35. The residue at position 53 (T53) is a Phosphothreonine. Phosphoserine occurs at positions 90 and 100. Residues 104 to 415 enclose the IF rod domain; it reads DLGAVEDLGG…HALLDREESS (312 aa). Coiled-coil stretches lie at residues 115–144, 199–248, and 295–395; these read LVEY…ESKA, RKAA…VKML, and QAKQ…LSHK. A tail region spans residues 396–415; sequence CQLQRDVASYHALLDREESS.

It belongs to the intermediate filament family. As to quaternary structure, part of a complex required for lens intermediate filament formation composed of BFSP1, BFSP2 and CRYAA. Found in a complex composed of PPL (via C-terminal linker domain), BFSP1 and BFSP2 in the retinal lens. Within the complex interacts with PPL (via C-terminal linker domain) and with BFSP1. Identified in a complex that contains VIM, EZR, AHNAK, BFSP1, BFSP2, ANK2, PLEC, PRX and spectrin. Interacts with LGSN. Interacts with VIM. As to expression, abundantly expressed in both the inner and outer cortex of the retina, expressed at a lower level in the nucleus of the retina (at protein level). Detected in eye lens fiber cells (at protein level).

It is found in the cell membrane. Its subcellular location is the cytoplasm. The protein resides in the cytoskeleton. It localises to the cell cortex. Functionally, required for the correct formation of lens intermediate filaments as part of a complex composed of BFSP1, BFSP2 and CRYAA. Plays a role in maintenance of retinal lens optical clarity. This is Phakinin (BFSP2) from Bos taurus (Bovine).